A 662-amino-acid polypeptide reads, in one-letter code: DNA ligase (662 aa).

NAD(+) contacts are provided by residues 31 to 35 (DKDYD) and 79 to 80 (SL). Lys121 (N6-AMP-lysine intermediate) is an active-site residue. NAD(+) contacts are provided by Arg143, Glu177, and Lys313. Zn(2+) is bound by residues Cys406, Cys409, Cys422, and Cys428. Positions 586–662 (VLESPFMGKT…LSEEEFENMI (77 aa)) constitute a BRCT domain.

The protein belongs to the NAD-dependent DNA ligase family. LigA subfamily. Requires Mg(2+) as cofactor. Mn(2+) is required as a cofactor.

The enzyme catalyses NAD(+) + (deoxyribonucleotide)n-3'-hydroxyl + 5'-phospho-(deoxyribonucleotide)m = (deoxyribonucleotide)n+m + AMP + beta-nicotinamide D-nucleotide.. Functionally, DNA ligase that catalyzes the formation of phosphodiester linkages between 5'-phosphoryl and 3'-hydroxyl groups in double-stranded DNA using NAD as a coenzyme and as the energy source for the reaction. It is essential for DNA replication and repair of damaged DNA. This chain is DNA ligase, found in Clostridium perfringens (strain 13 / Type A).